Reading from the N-terminus, the 355-residue chain is DNA-directed RNA polymerase subunit alpha (355 aa).

An alpha N-terminal domain (alpha-NTD) region spans residues 1 to 248; the sequence is MYYNNDVSLC…EQLQPFISSD (248 aa). An alpha C-terminal domain (alpha-CTD) region spans residues 267 to 355; that stretch reads YDPVLLRKVD…ELAKQHTDED (89 aa).

It belongs to the RNA polymerase alpha chain family. In terms of assembly, homodimer. The RNAP catalytic core consists of 2 alpha, 1 beta, 1 beta' and 1 omega subunit. When a sigma factor is associated with the core the holoenzyme is formed, which can initiate transcription.

It carries out the reaction RNA(n) + a ribonucleoside 5'-triphosphate = RNA(n+1) + diphosphate. Functionally, DNA-dependent RNA polymerase catalyzes the transcription of DNA into RNA using the four ribonucleoside triphosphates as substrates. In Wolbachia pipientis wMel, this protein is DNA-directed RNA polymerase subunit alpha.